The primary structure comprises 133 residues: Glycophorin-A (133 aa).

Thr1 and Thr6 each carry an O-linked (GalNAc...) threonine glycan. The disordered stretch occupies residues Thr1–Val34. Topologically, residues Thr1 to Glu62 are extracellular. The O-linked (GalNAc...) serine glycan is linked to Ser11. A glycan (O-linked (GalNAc...) threonine) is linked at Thr13. N-linked (GlcNAc...) asparagine glycosylation is present at Asn19. 3 O-linked (GalNAc...) threonine glycosylation sites follow: Thr21, Thr23, and Thr30. Ser31 is a glycosylation site (O-linked (GalNAc...) serine). Asn39 carries N-linked (GlcNAc...) asparagine glycosylation. Thr41 and Thr48 each carry an O-linked (GalNAc...) threonine glycan. Residues Ile63 to Ile85 form a helical membrane-spanning segment. Over Arg86–Ser133 the chain is Cytoplasmic. The interval Leu93–Ser133 is disordered.

The protein belongs to the glycophorin-A family. As to quaternary structure, homodimer. Component of the ankyrin-1 complex in the erythrocyte, composed of ANK1, RHCE, RHAG, SLC4A1, EPB42, GYPA, GYPB and AQP1. Interacts with SLC4A1; a GYPA monomer is bound at each end of the SLC4A1 dimer forming a heterotetramer.

It is found in the membrane. In terms of biological role, component of the ankyrin-1 complex, a multiprotein complex involved in the stability and shape of the erythrocyte membrane. Glycophorin A is the major intrinsic membrane protein of the erythrocyte. The N-terminal glycosylated segment, which lies outside the erythrocyte membrane, has MN blood group receptors. Appears to be important for the function of SLC4A1 and is required for high activity of SLC4A1. May be involved in translocation of SLC4A1 to the plasma membrane. This Sus scrofa (Pig) protein is Glycophorin-A.